The chain runs to 167 residues: UPF0114 protein in repA1-repA2 intergenic region (167 aa).

The next 3 membrane-spanning stretches (helical) occupy residues 15 to 35 (LMFPVYVGLSFGFILLTLKFF), 53 to 73 (LVLAVLSLIDIALVGGLLVMV), and 136 to 156 (IMLCVIIRLTFVLSAFGMAYI).

The protein belongs to the UPF0114 family.

It localises to the cell membrane. This Buchnera aphidicola subsp. Schizaphis graminum (strain Sg) protein is UPF0114 protein in repA1-repA2 intergenic region.